The following is a 355-amino-acid chain: Olfactory receptor 1I1 (355 aa).

Topologically, residues 1 to 25 (MEPEKQTEISEFFLQGLSEKPEHQT) are extracellular. Residues 26 to 49 (LLFTMFLSTYLVTIIGNALIILAI) form a helical membrane-spanning segment. Over 50 to 57 (ITDSHLHT) the chain is Cytoplasmic. A helical membrane pass occupies residues 58–79 (PMYFFLFNLSLVDTLLSSTTVP). Residues 80 to 100 (KMLANIQAQSRAIPFVGCLTQ) lie on the Extracellular side of the membrane. Residues 101-120 (MYAFHLFGTMDSFLLAVMAI) traverse the membrane as a helical segment. Residues 121-139 (DRFVAIVHPQRYLVLMCSP) lie on the Cytoplasmic side of the membrane. The helical transmembrane segment at 140-158 (VCGLLLGASWMITNLQSLI) threads the bilayer. Topologically, residues 159–195 (HTCLMAQLTFCAGSEISHFFCDLMPLLKLSGSDTHTN) are extracellular. A helical transmembrane segment spans residues 196-219 (ELVIFAFGIVVGTSPFSCILLSYI). The Cytoplasmic portion of the chain corresponds to 220–236 (RIFWTVFKIPSTRGKWK). A helical membrane pass occupies residues 237–259 (AFSTCGLHLTVVSLSYGTIFAVY). Residues 260–272 (LQPTSPSSSQKDK) are Extracellular-facing. A helical membrane pass occupies residues 273 to 292 (AAALMCGVFIPMLNPFIYSI). Residues 293-355 (RNKDMKAALG…QSLAGNRDME (63 aa)) lie on the Cytoplasmic side of the membrane.

Belongs to the G-protein coupled receptor 1 family.

It localises to the cell membrane. In terms of biological role, odorant receptor. In Homo sapiens (Human), this protein is Olfactory receptor 1I1 (OR1I1).